The primary structure comprises 280 residues: Small ribosomal subunit protein uS3 (280 aa).

The KH type-2 domain maps to 38 to 106; it reads IRRLLSTGLE…QVQLNILEVR (69 aa). The tract at residues 215-280 is disordered; that stretch reads AAAAPAGAER…PAAEPQSTES (66 aa). The segment covering 238-280 has biased composition (low complexity); that stretch reads SGASGTTATGTEAGRAAASADESTAAGQPAEAAPAAEPQSTES.

Belongs to the universal ribosomal protein uS3 family. Part of the 30S ribosomal subunit. Forms a tight complex with proteins S10 and S14.

In terms of biological role, binds the lower part of the 30S subunit head. Binds mRNA in the 70S ribosome, positioning it for translation. This Mycobacterium avium (strain 104) protein is Small ribosomal subunit protein uS3.